A 308-amino-acid chain; its full sequence is MVSDEDELNLLVIVVDANPIWWGKQALKESQFTLSKCIDAVMVLGNSHLFMNRSNKLAVIASHIQESRFLYPGKNGRLGDFFGDPGNPPEFNPSGSKDGKYELLTSANEVIVEEIKDLMTKSDIKGQHTETLLAGSLAKALCYIHRMNKEVKDNQEMKSRILVIKAAEDSALQYMNFMNVIFAAQKQNILIDACVLDSDSGLLQQACDITGGLYLKVPQMPSLLQYLLWVFLPDQDQRSQLILPPPVHVDYRAACFCHRNLIEIGYVCSVCLSIFCNFSPICTTCETAFKISLPPVLKAKKKKLKVSA.

Residues Cys268–Cys285 form a C4-type zinc finger.

Belongs to the TFB4 family. As to quaternary structure, part of a TFIID-containing RNA polymerase II pre-initiation complex that is composed of TBP and at least GTF2A1, GTF2A2, GTF2E1, GTF2E2, GTF2F1, GTF2H2, GTF2H3, GTF2H4, GTF2H5, GTF2B, TCEA1, ERCC2, ERCC3, TAF1, TAF2, TAF3, TAF4, TAF5, TAF6, TAF7, TAF8, TAF9, TAF10, TAF11, TAF12 and TAF13. Component of the 7-subunit TFIIH core complex composed of XPB/ERCC3, XPD/ERCC2, GTF2H1, GTF2H2, GTF2H3, GTF2H4 and GTF2H5, which is active in NER. The core complex associates with the 3-subunit CDK-activating kinase (CAK) module composed of CCNH/cyclin H, CDK7 and MNAT1 to form the 10-subunit holoenzyme (holo-TFIIH) active in transcription. Interacts with RARA; the interaction requires prior phosphorylation of RARA on 'Ser-369' which then enhances interaction of RARA with CDK7.

The protein resides in the nucleus. Its function is as follows. Component of the general transcription and DNA repair factor IIH (TFIIH) core complex, which is involved in general and transcription-coupled nucleotide excision repair (NER) of damaged DNA and, when complexed to CAK, in RNA transcription by RNA polymerase II. In NER, TFIIH acts by opening DNA around the lesion to allow the excision of the damaged oligonucleotide and its replacement by a new DNA fragment. In transcription, TFIIH has an essential role in transcription initiation. When the pre-initiation complex (PIC) has been established, TFIIH is required for promoter opening and promoter escape. Phosphorylation of the C-terminal tail (CTD) of the largest subunit of RNA polymerase II by the kinase module CAK controls the initiation of transcription. This Homo sapiens (Human) protein is General transcription factor IIH subunit 3 (GTF2H3).